Reading from the N-terminus, the 283-residue chain is ATP phosphoribosyltransferase (283 aa).

This sequence belongs to the ATP phosphoribosyltransferase family. Long subfamily. Mg(2+) is required as a cofactor.

The protein resides in the cytoplasm. The enzyme catalyses 1-(5-phospho-beta-D-ribosyl)-ATP + diphosphate = 5-phospho-alpha-D-ribose 1-diphosphate + ATP. Its pathway is amino-acid biosynthesis; L-histidine biosynthesis; L-histidine from 5-phospho-alpha-D-ribose 1-diphosphate: step 1/9. Feedback inhibited by histidine. In terms of biological role, catalyzes the condensation of ATP and 5-phosphoribose 1-diphosphate to form N'-(5'-phosphoribosyl)-ATP (PR-ATP). Has a crucial role in the pathway because the rate of histidine biosynthesis seems to be controlled primarily by regulation of HisG enzymatic activity. The chain is ATP phosphoribosyltransferase from Methanopyrus kandleri (strain AV19 / DSM 6324 / JCM 9639 / NBRC 100938).